Here is a 76-residue protein sequence, read N- to C-terminus: DNA-directed RNA polymerase subunit epsilon (76 aa).

Belongs to the RNA polymerase subunit epsilon family. As to quaternary structure, RNAP is composed of a core of 2 alpha, a beta and a beta' subunit. The core is associated with a delta subunit, and at least one of epsilon or omega. When a sigma factor is associated with the core the holoenzyme is formed, which can initiate transcription.

The catalysed reaction is RNA(n) + a ribonucleoside 5'-triphosphate = RNA(n+1) + diphosphate. Functionally, a non-essential component of RNA polymerase (RNAP). The sequence is that of DNA-directed RNA polymerase subunit epsilon from Streptococcus equi subsp. equi (strain 4047).